Consider the following 209-residue polypeptide: Ribosomal RNA large subunit methyltransferase E (209 aa).

S-adenosyl-L-methionine contacts are provided by Gly63, Trp65, Asp83, Asp99, and Asp124. Catalysis depends on Lys164, which acts as the Proton acceptor.

It belongs to the class I-like SAM-binding methyltransferase superfamily. RNA methyltransferase RlmE family.

The protein resides in the cytoplasm. The enzyme catalyses uridine(2552) in 23S rRNA + S-adenosyl-L-methionine = 2'-O-methyluridine(2552) in 23S rRNA + S-adenosyl-L-homocysteine + H(+). Specifically methylates the uridine in position 2552 of 23S rRNA at the 2'-O position of the ribose in the fully assembled 50S ribosomal subunit. The protein is Ribosomal RNA large subunit methyltransferase E of Shigella dysenteriae serotype 1 (strain Sd197).